The following is a 197-amino-acid chain: Glycerol-3-phosphate acyltransferase (197 aa).

Transmembrane regions (helical) follow at residues 1–21 (MDFIFPLISYLLGAIPFGLLI), 50–70 (LGFATLLCDSLKGFLPMVLAA), 82–102 (IVCLSGVMGVLGHMFPVYLGF), 112–132 (LGVFLFLSPAAIAISLGVFAA), and 159–179 (GASQLKIITAGFVALLIWIKH).

The protein belongs to the PlsY family. Probably interacts with PlsX.

Its subcellular location is the cell inner membrane. It catalyses the reaction an acyl phosphate + sn-glycerol 3-phosphate = a 1-acyl-sn-glycero-3-phosphate + phosphate. It functions in the pathway lipid metabolism; phospholipid metabolism. In terms of biological role, catalyzes the transfer of an acyl group from acyl-phosphate (acyl-PO(4)) to glycerol-3-phosphate (G3P) to form lysophosphatidic acid (LPA). This enzyme utilizes acyl-phosphate as fatty acyl donor, but not acyl-CoA or acyl-ACP. This Desulfotalea psychrophila (strain LSv54 / DSM 12343) protein is Glycerol-3-phosphate acyltransferase.